A 424-amino-acid chain; its full sequence is MHFFPIQLLVLFFAEKIAFAENSDQTVSRVDSNRYSVAAEKKFLLYDVNFGEGFNLRRDVYMRVANTVRSLRDSGENYILVLPPWGRLHHWKRMEVALSWRLFFDLESLNRFIPVIEFEDFLDENRPIDQVIYLQHYAEGWGTEYVRKFEKRSCLPPAESHYKQVEEFKWKGWFYSYEDVYSRNFQCVSIQGDSGTLKDLLKHSNFSESTSIMVDRAETILHEHYGEVDYWKARRSMRYSNDLVDVADAFRKKYLDSDDKRDKTKLVDDWTKEKPRRTAIGGPYLGIHWRRRDFLYARRAQLPTIPGTAKILQDLCKKLDLQKIYLATDAPDQEVDELKALLNGELEVYRFTDTQKLNDGQIAIIDQYLCAHAAYFIGSYESTFTFRIQEDREIIGFPISTTFNRLCPDTEPTCEQPAKWKIVY.

The N-terminal stretch at 1–20 is a signal peptide; that stretch reads MHFFPIQLLVLFFAEKIAFA. GDP-beta-L-fucose is bound at residue 51–55; it reads GEGFN. Glu-52 serves as the catalytic Proton acceptor. Cys-154 and Cys-187 are disulfide-bonded. N-linked (GlcNAc...) asparagine glycosylation occurs at Asn-205. GDP-beta-L-fucose-binding positions include 288–290, Asp-366, and 383–384; these read HWR and TF. A disulfide bond links Cys-407 and Cys-414.

It belongs to the glycosyltransferase 68 family. Expressed in the anterior part of embryos, in the hypodermal and neuronal cells of the head. Expressed at different levels in a variety of cell types after hatching, including neuronal, hypodermal, muscle, intestinal, and somatic gonadal cells. Expressed in the nerve ring around the pharynx, in dorsal and ventral nerve cords, intestine, and a variety of hypodermal cells of L1-L3 larvae. Expressed in gonadal sheath cells, spermatheca, and tissues surrounding the vulva of adult hermaphrodites, and in the body wall muscle and hypodermal cells of adults of both sexes.

The protein resides in the endoplasmic reticulum. It is found in the golgi apparatus. The catalysed reaction is L-seryl-[protein] + GDP-beta-L-fucose = 3-O-(alpha-L-fucosyl)-L-seryl-[protein] + GDP + H(+). It catalyses the reaction L-threonyl-[protein] + GDP-beta-L-fucose = 3-O-(alpha-L-fucosyl)-L-threonyl-[protein] + GDP + H(+). It participates in protein modification; protein glycosylation. Functionally, catalyzes the reaction that attaches fucose through an O-glycosidic linkage to a conserved serine or threonine residue in the consensus sequence C1-X-X-S/T-C2 of thrombospondin type I repeats (TSRs) where C1 and C2 are the first and second cysteines of the repeat, respectively. O-fucosylates members of several protein families including the ADAMTS superfamily and the thrombospondin (TSP) and spondin families. The chain is GDP-fucose protein O-fucosyltransferase 2 (pad-2) from Caenorhabditis elegans.